Reading from the N-terminus, the 553-residue chain is Dihydroxy-acid dehydratase 1 (553 aa).

A Mg(2+)-binding site is contributed by D78. C119 serves as a coordination point for [2Fe-2S] cluster. Mg(2+) contacts are provided by D120 and K121. K121 carries the N6-carboxylysine modification. C191 is a binding site for [2Fe-2S] cluster. Mg(2+) is bound at residue E444. S470 serves as the catalytic Proton acceptor.

Belongs to the IlvD/Edd family. As to quaternary structure, homodimer. [2Fe-2S] cluster serves as cofactor. It depends on Mg(2+) as a cofactor.

The catalysed reaction is (2R)-2,3-dihydroxy-3-methylbutanoate = 3-methyl-2-oxobutanoate + H2O. It catalyses the reaction (2R,3R)-2,3-dihydroxy-3-methylpentanoate = (S)-3-methyl-2-oxopentanoate + H2O. It participates in amino-acid biosynthesis; L-isoleucine biosynthesis; L-isoleucine from 2-oxobutanoate: step 3/4. It functions in the pathway amino-acid biosynthesis; L-valine biosynthesis; L-valine from pyruvate: step 3/4. Functions in the biosynthesis of branched-chain amino acids. Catalyzes the dehydration of (2R,3R)-2,3-dihydroxy-3-methylpentanoate (2,3-dihydroxy-3-methylvalerate) into 2-oxo-3-methylpentanoate (2-oxo-3-methylvalerate) and of (2R)-2,3-dihydroxy-3-methylbutanoate (2,3-dihydroxyisovalerate) into 2-oxo-3-methylbutanoate (2-oxoisovalerate), the penultimate precursor to L-isoleucine and L-valine, respectively. This is Dihydroxy-acid dehydratase 1 from Methanosarcina acetivorans (strain ATCC 35395 / DSM 2834 / JCM 12185 / C2A).